Consider the following 115-residue polypeptide: Galanin-like peptide (115 aa).

A signal peptide spans 1-23 (MAPSVPLVLLLVLLLSLAETPAS). The propeptide occupies 86–115 (NVMEAFAKPEIGDLDVLSKKIPKEEDVLKS).

The protein belongs to the galanin family. Hypothalamus and pituitary gland.

Its subcellular location is the secreted. In terms of biological role, hypothalamic neuropeptide which binds to the G-protein-coupled galanin receptors (GALR1, GALR2 and GALR3). Involved in a large number of putative physiological functions in CNS homeostatic processes, including the regulation of gonadotropin-releasing hormone secretion. Functionally, exhibits potent and dose-dependent vasoconstrictor and anti-edema activity in the cutaneous microvasculature, a physiologic effects which does not appear to be mediated via GALR1 or GALR2. Exhibits antimicrobial activity against Gram-negative bacterias, inducing bacterial membrane blebbing. The chain is Galanin-like peptide (GALP) from Macaca nemestrina (Pig-tailed macaque).